The following is a 72-amino-acid chain: Disintegrin crotatroxin (72 aa).

A Disintegrin domain is found at 1–72 (AGEECDCGSP…ADCPRNGLYG (72 aa)). 6 disulfide bridges follow: Cys-5-Cys-20, Cys-7-Cys-15, Cys-14-Cys-37, Cys-28-Cys-34, Cys-33-Cys-58, and Cys-46-Cys-65. Residues 50–52 (RGD) carry the Cell attachment site motif.

This sequence belongs to the venom metalloproteinase (M12B) family. P-II subfamily. P-IIa sub-subfamily. In terms of assembly, monomer. In terms of tissue distribution, expressed by the venom gland.

It is found in the secreted. Its function is as follows. Inhibits fibrinogen interaction with platelets. Acts by binding to the alpha-IIb/beta-3 (ITGA2B/ITGB3) on the platelet surface and inhibits aggregation induced by ADP, thrombin, platelet-activating factor and collagen. Inhibits ADP-induced platelet aggregation (IC(50) = 17.5nM), cancer cell migration in vitro, and experimental lung tumor colonization of cancer cells. This Crotalus atrox (Western diamondback rattlesnake) protein is Disintegrin crotatroxin.